A 745-amino-acid polypeptide reads, in one-letter code: Elongation factor G, mitochondrial (745 aa).

Residues 40–317 (ERIRNIGISA…AVLDYLPNPG (278 aa)) enclose the tr-type G domain. Residues 49 to 56 (AHIDSGKT), 116 to 120 (DTPGH), and 170 to 173 (NKLD) each bind GTP.

The protein belongs to the TRAFAC class translation factor GTPase superfamily. Classic translation factor GTPase family. EF-G/EF-2 subfamily.

It is found in the mitochondrion. The protein operates within protein biosynthesis; polypeptide chain elongation. Functionally, mitochondrial GTPase that catalyzes the GTP-dependent ribosomal translocation step during translation elongation. During this step, the ribosome changes from the pre-translocational (PRE) to the post-translocational (POST) state as the newly formed A-site-bound peptidyl-tRNA and P-site-bound deacylated tRNA move to the P and E sites, respectively. Catalyzes the coordinated movement of the two tRNA molecules, the mRNA and conformational changes in the ribosome. Essential during development as it acts as a retrograde signal from mitochondria to the nucleus to slow down cell proliferation if mitochondrial energy output is low. This is Elongation factor G, mitochondrial from Drosophila melanogaster (Fruit fly).